The following is a 204-amino-acid chain: Urease accessory protein UreG (204 aa).

12-19 is a binding site for GTP; sequence GPVGSGKT.

This sequence belongs to the SIMIBI class G3E GTPase family. UreG subfamily. In terms of assembly, homodimer. UreD, UreF and UreG form a complex that acts as a GTP-hydrolysis-dependent molecular chaperone, activating the urease apoprotein by helping to assemble the nickel containing metallocenter of UreC. The UreE protein probably delivers the nickel.

The protein resides in the cytoplasm. Functionally, facilitates the functional incorporation of the urease nickel metallocenter. This process requires GTP hydrolysis, probably effectuated by UreG. This chain is Urease accessory protein UreG, found in Pseudomonas fluorescens (strain ATCC BAA-477 / NRRL B-23932 / Pf-5).